Reading from the N-terminus, the 111-residue chain is Large ribosomal subunit protein uL22 (111 aa).

This sequence belongs to the universal ribosomal protein uL22 family. In terms of assembly, part of the 50S ribosomal subunit.

In terms of biological role, this protein binds specifically to 23S rRNA; its binding is stimulated by other ribosomal proteins, e.g. L4, L17, and L20. It is important during the early stages of 50S assembly. It makes multiple contacts with different domains of the 23S rRNA in the assembled 50S subunit and ribosome. Its function is as follows. The globular domain of the protein is located near the polypeptide exit tunnel on the outside of the subunit, while an extended beta-hairpin is found that lines the wall of the exit tunnel in the center of the 70S ribosome. This is Large ribosomal subunit protein uL22 from Clostridioides difficile (strain 630) (Peptoclostridium difficile).